The following is a 1088-amino-acid chain: RNA-directed RNA polymerase (1088 aa).

Residues 501–687 enclose the RdRp catalytic domain; the sequence is LSYGDVTRFL…AKRYLAGGKI (187 aa).

It belongs to the reoviridae RNA-directed RNA polymerase family. Interacts with VP3 (Potential). Interacts with VP2; this interaction activates VP1. Interacts with NSP5; this interaction is probably necessary for the formation of functional virus factories. Interacts with NSP2; this interaction is weak. It depends on Mg(2+) as a cofactor.

The protein resides in the virion. It carries out the reaction RNA(n) + a ribonucleoside 5'-triphosphate = RNA(n+1) + diphosphate. Its function is as follows. RNA-directed RNA polymerase that is involved in both transcription and genome replication. Together with VP3 capping enzyme, forms an enzyme complex positioned near the channels situated at each of the five-fold vertices of the core. Following infection, the outermost layer of the virus is lost, leaving a double-layered particle (DLP) made up of the core and VP6 shell. VP1 then catalyzes the transcription of fully conservative plus-strand genomic RNAs that are extruded through the DLP's channels into the cytoplasm where they function as mRNAs for translation of viral proteins. One copy of each of the viral (+)RNAs is also recruited during core assembly, together with newly synthesized polymerase complexes and VP2. The polymerase of these novo-formed particles catalyzes the synthesis of complementary minus-strands leading to dsRNA formation. To do so, the polymerase specifically recognizes and binds 4 bases 5'-UGUG-3' in the conserved 3'-sequence of plus-strand RNA templates. VP2 presumably activates the autoinhibited VP1-RNA complex to coordinate packaging and genome replication. Once dsRNA synthesis is complete, the polymerase switches to the transcriptional mode, thus providing secondary transcription. The polypeptide is RNA-directed RNA polymerase (Rotavirus A (strain RVA/Human/Japan/KU/1995/G1P1A[8]) (RV-A)).